The primary structure comprises 101 residues: Large ribosomal subunit protein uL24 (101 aa).

The protein belongs to the universal ribosomal protein uL24 family. Part of the 50S ribosomal subunit.

One of two assembly initiator proteins, it binds directly to the 5'-end of the 23S rRNA, where it nucleates assembly of the 50S subunit. Its function is as follows. One of the proteins that surrounds the polypeptide exit tunnel on the outside of the subunit. In Cereibacter sphaeroides (strain ATCC 17025 / ATH 2.4.3) (Rhodobacter sphaeroides), this protein is Large ribosomal subunit protein uL24.